The chain runs to 87 residues: DNA-directed RNA polymerase subunit omega (87 aa).

This sequence belongs to the RNA polymerase subunit omega family. As to quaternary structure, the RNAP catalytic core consists of 2 alpha, 1 beta, 1 beta' and 1 omega subunit. When a sigma factor is associated with the core the holoenzyme is formed, which can initiate transcription.

It catalyses the reaction RNA(n) + a ribonucleoside 5'-triphosphate = RNA(n+1) + diphosphate. Promotes RNA polymerase assembly. Latches the N- and C-terminal regions of the beta' subunit thereby facilitating its interaction with the beta and alpha subunits. The protein is DNA-directed RNA polymerase subunit omega of Pseudomonas entomophila (strain L48).